Consider the following 76-residue polypeptide: Immune protein Tsi5 (76 aa).

A run of 2 helical transmembrane segments spans residues 19 to 39 and 43 to 63; these read LLMT…EWFF and WVTV…LYLY.

It is found in the membrane. Functionally, immunity protein that plays a role in preventing early activation of toxin Tse5. The chain is Immune protein Tsi5 from Pseudomonas aeruginosa (strain ATCC 15692 / DSM 22644 / CIP 104116 / JCM 14847 / LMG 12228 / 1C / PRS 101 / PAO1).